The sequence spans 85 residues: Arminin 2b (85 aa).

A signal peptide spans 1–18; the sequence is MKTVFAILFLAFIALTYA. The propeptide occupies 19–57; the sequence is RSYEDVKEEIKNEIEKEILEDLEEESDELNDKSKEINDA. Ala82 is subject to Alanine amide.

Belongs to the arminin family. Expressed in entodermal epithelium along the body column.

It localises to the secreted. It is found in the target cell membrane. Its function is as follows. Antimicrobial peptide with a broad-spectrum antimicrobial activity. Keeps its antibacterial activity under a wide range of salt concentrations that mimic physiological conditions of human blood, which is surprising, since Hydra is an obligate freshwater animal with nearly no salt tolerance. Does not affect red blood cells. The polypeptide is Arminin 2b (Hydra vulgaris (Hydra)).